The primary structure comprises 554 residues: CTP synthase (554 aa).

Positions 1 to 265 (MTPLIFVTGG…DELVIEQFKL (265 aa)) are amidoligase domain. Serine 13 serves as a coordination point for CTP. A UTP-binding site is contributed by serine 13. ATP-binding positions include 14–19 (SLGKGI) and aspartate 71. Mg(2+)-binding residues include aspartate 71 and glutamate 139. Residues 146 to 148 (DIE), 186 to 191 (KTKPTQ), and lysine 222 contribute to the CTP site. UTP-binding positions include 186–191 (KTKPTQ) and lysine 222. The 254-residue stretch at 292-545 (NIAVVGKYVD…VRAAREKKAG (254 aa)) folds into the Glutamine amidotransferase type-1 domain. L-glutamine is bound at residue glycine 353. Cysteine 380 acts as the Nucleophile; for glutamine hydrolysis in catalysis. Residues 381 to 384 (YGMQ), glutamate 404, and arginine 471 contribute to the L-glutamine site. Catalysis depends on residues histidine 518 and glutamate 520.

Belongs to the CTP synthase family. As to quaternary structure, homotetramer.

The enzyme catalyses UTP + L-glutamine + ATP + H2O = CTP + L-glutamate + ADP + phosphate + 2 H(+). It carries out the reaction L-glutamine + H2O = L-glutamate + NH4(+). The catalysed reaction is UTP + NH4(+) + ATP = CTP + ADP + phosphate + 2 H(+). Its pathway is pyrimidine metabolism; CTP biosynthesis via de novo pathway; CTP from UDP: step 2/2. Its activity is regulated as follows. Allosterically activated by GTP, when glutamine is the substrate; GTP has no effect on the reaction when ammonia is the substrate. The allosteric effector GTP functions by stabilizing the protein conformation that binds the tetrahedral intermediate(s) formed during glutamine hydrolysis. Inhibited by the product CTP, via allosteric rather than competitive inhibition. Functionally, catalyzes the ATP-dependent amination of UTP to CTP with either L-glutamine or ammonia as the source of nitrogen. Regulates intracellular CTP levels through interactions with the four ribonucleotide triphosphates. This is CTP synthase from Xanthomonas euvesicatoria pv. vesicatoria (strain 85-10) (Xanthomonas campestris pv. vesicatoria).